A 181-amino-acid polypeptide reads, in one-letter code: Crossover junction endodeoxyribonuclease RuvC (181 aa).

Catalysis depends on residues Asp7, Glu67, and Asp139. 3 residues coordinate Mg(2+): Asp7, Glu67, and Asp139.

The protein belongs to the RuvC family. As to quaternary structure, homodimer which binds Holliday junction (HJ) DNA. The HJ becomes 2-fold symmetrical on binding to RuvC with unstacked arms; it has a different conformation from HJ DNA in complex with RuvA. In the full resolvosome a probable DNA-RuvA(4)-RuvB(12)-RuvC(2) complex forms which resolves the HJ. Mg(2+) serves as cofactor.

The protein resides in the cytoplasm. The enzyme catalyses Endonucleolytic cleavage at a junction such as a reciprocal single-stranded crossover between two homologous DNA duplexes (Holliday junction).. In terms of biological role, the RuvA-RuvB-RuvC complex processes Holliday junction (HJ) DNA during genetic recombination and DNA repair. Endonuclease that resolves HJ intermediates. Cleaves cruciform DNA by making single-stranded nicks across the HJ at symmetrical positions within the homologous arms, yielding a 5'-phosphate and a 3'-hydroxyl group; requires a central core of homology in the junction. The consensus cleavage sequence is 5'-(A/T)TT(C/G)-3'. Cleavage occurs on the 3'-side of the TT dinucleotide at the point of strand exchange. HJ branch migration catalyzed by RuvA-RuvB allows RuvC to scan DNA until it finds its consensus sequence, where it cleaves and resolves the cruciform DNA. This is Crossover junction endodeoxyribonuclease RuvC from Ralstonia nicotianae (strain ATCC BAA-1114 / GMI1000) (Ralstonia solanacearum).